A 412-amino-acid chain; its full sequence is Acetylornithine aminotransferase (412 aa).

Pyridoxal 5'-phosphate contacts are provided by residues 109–110 (GA) and Phe142. Residue Arg145 participates in N(2)-acetyl-L-ornithine binding. 233 to 236 (DEVQ) provides a ligand contact to pyridoxal 5'-phosphate. Residue Lys262 is modified to N6-(pyridoxal phosphate)lysine. Ser289 lines the N(2)-acetyl-L-ornithine pocket. Thr290 contributes to the pyridoxal 5'-phosphate binding site.

This sequence belongs to the class-III pyridoxal-phosphate-dependent aminotransferase family. ArgD subfamily. As to quaternary structure, homodimer. Pyridoxal 5'-phosphate is required as a cofactor.

Its subcellular location is the cytoplasm. It carries out the reaction N(2)-acetyl-L-ornithine + 2-oxoglutarate = N-acetyl-L-glutamate 5-semialdehyde + L-glutamate. Its pathway is amino-acid biosynthesis; L-arginine biosynthesis; N(2)-acetyl-L-ornithine from L-glutamate: step 4/4. In Thermosynechococcus vestitus (strain NIES-2133 / IAM M-273 / BP-1), this protein is Acetylornithine aminotransferase.